The chain runs to 139 residues: General odorant-binding protein 56a (139 aa).

An N-terminal signal peptide occupies residues M1–G19. N-linked (GlcNAc...) asparagine glycosylation occurs at N23. Cystine bridges form between C39–C71, C67–C118, and C109–C127.

Belongs to the PBP/GOBP family. Expressed in ventral pits of larvae. In adults, it is not specifically expressed in chemosensory organs. Also expressed in stalk cells at the proximal tip of the wing disk.

It is found in the secreted. Its function is as follows. Present in the aqueous fluid surrounding olfactory sensory dendrites and are thought to aid in the capture and transport of hydrophobic odorants into and through this fluid. The sequence is that of General odorant-binding protein 56a (Obp56a) from Drosophila melanogaster (Fruit fly).